An 81-amino-acid chain; its full sequence is Trefoil factor 3 (81 aa).

Positions 1–22 (METRALWLMLLVVLVAGSSGIA) are cleaved as a signal peptide. Residues 31–74 (SQCMVPANVRVDCGYPSVTSEQCNNRGCCFDSSIPNVPWCFKPL) form the P-type domain. Intrachain disulfides connect Cys33/Cys59, Cys43/Cys58, and Cys53/Cys70.

As to quaternary structure, monomer. Homodimer; disulfide-linked. As to expression, expressed in goblet cells of the intestines and colon (at protein level). Expressed abundantly in goblet cells of intestine and colon, and at low levels in stomach. No expression in brain, lung, spleen, kidney, uterus, pancreas, liver, heart or thymus.

It is found in the secreted. The protein resides in the extracellular space. The protein localises to the extracellular matrix. It localises to the cytoplasm. Its function is as follows. Involved in the maintenance and repair of the intestinal mucosa. Promotes the mobility of epithelial cells in healing processes (motogen). This chain is Trefoil factor 3 (Tff3), found in Mus musculus (Mouse).